The following is a 453-amino-acid chain: Homeobox protein meis3 (453 aa).

The disordered stretch occupies residues 33 to 64; that stretch reads HHSLSQSAPYGSTGAAHRVPMPPGMGSNDGLK. In terms of domain architecture, MEIS N-terminal spans 102 to 185; sequence GGDVCSSDSF…PIDLVIDDRD (84 aa). The segment at 192 to 272 is disordered; the sequence is LEDFTGSCTS…RDKKRNKKRG (81 aa). Residues 197–209 show a composition bias toward polar residues; sequence GSCTSLSDQNNSW. The segment covering 218–230 has biased composition (low complexity); that stretch reads STHSGTPGPSSGG. Over residues 231–242 the composition is skewed to polar residues; the sequence is LASQSGDNSSEQ. Residues 267-329 constitute a DNA-binding region (homeobox); sequence RNKKRGIFPK…NARRRIVQPM (63 aa).

The protein belongs to the TALE/MEIS homeobox family.

The protein resides in the nucleus. Functionally, a caudalizing protein which is required to pattern the anterior/posterior (A/P) axis during central nervous system (CNS) formation. Inhibits anterior neural expression and acts as a transcriptional activator to induce posterior neural gene expression. Maintains a proper A/P balance required for hindbrain formation by activating the FGF/MAPK pathway, which modulates the planar cell polarity (PCP) pathway. Interacts with retinoid signaling during hindbrain patterning. This chain is Homeobox protein meis3, found in Xenopus tropicalis (Western clawed frog).